A 243-amino-acid chain; its full sequence is Homeobox protein goosecoid isoform A (243 aa).

The homeobox DNA-binding region spans 148-207; the sequence is KRRHRTIFTDEQLEALENLFQETKYPDVGTREQLARRVHLREEKVEVWFKNRRAKWRRQK. The segment at 201-243 is disordered; it reads AKWRRQKRSSSEESENAQKWNKSSKNSAEKADEQVKSDLDSDS. Over residues 217 to 226 the composition is skewed to polar residues; the sequence is AQKWNKSSKN. Residues 227–243 are compositionally biased toward basic and acidic residues; it reads SAEKADEQVKSDLDSDS.

It belongs to the paired homeobox family. Bicoid subfamily. In terms of tissue distribution, at the start of gastrulation, it is found in a patch of cells encompassing 60 degrees of arc on the dorsal marginal zone.

It is found in the nucleus. Functionally, plays a central role in executing Spemann's organizer phenomenon (the dorsal blastopore lip of the early Xenopus laevis gastrula can organize a complete secondary body axis when transplanted to another embryo). The protein is Homeobox protein goosecoid isoform A (gsc-a) of Xenopus laevis (African clawed frog).